A 60-amino-acid polypeptide reads, in one-letter code: UPF0434 protein Spro_1718 (60 aa).

It belongs to the UPF0434 family.

This is UPF0434 protein Spro_1718 from Serratia proteamaculans (strain 568).